The sequence spans 240 residues: Probable transcriptional regulatory protein HP_0162 (240 aa).

Belongs to the TACO1 family.

Its subcellular location is the cytoplasm. The sequence is that of Probable transcriptional regulatory protein HP_0162 from Helicobacter pylori (strain ATCC 700392 / 26695) (Campylobacter pylori).